The primary structure comprises 71 residues: Sec-independent protein translocase protein TatA (71 aa).

The chain crosses the membrane as a helical span at residues 1–21 (MGSFSIWHWLIVLVVVLLLFG). Residues 47-71 (AEEAKTVEHRTDEPVGEVKQKASKS) form a disordered region. The segment covering 49-71 (EAKTVEHRTDEPVGEVKQKASKS) has biased composition (basic and acidic residues).

It belongs to the TatA/E family. The Tat system comprises two distinct complexes: a TatABC complex, containing multiple copies of TatA, TatB and TatC subunits, and a separate TatA complex, containing only TatA subunits. Substrates initially bind to the TatABC complex, which probably triggers association of the separate TatA complex to form the active translocon.

Its subcellular location is the cell inner membrane. Part of the twin-arginine translocation (Tat) system that transports large folded proteins containing a characteristic twin-arginine motif in their signal peptide across membranes. TatA could form the protein-conducting channel of the Tat system. The protein is Sec-independent protein translocase protein TatA of Chelativorans sp. (strain BNC1).